We begin with the raw amino-acid sequence, 486 residues long: Aspartyl/glutamyl-tRNA(Asn/Gln) amidotransferase subunit B (486 aa).

The protein belongs to the GatB/GatE family. GatB subfamily. In terms of assembly, heterotrimer of A, B and C subunits.

It catalyses the reaction L-glutamyl-tRNA(Gln) + L-glutamine + ATP + H2O = L-glutaminyl-tRNA(Gln) + L-glutamate + ADP + phosphate + H(+). The catalysed reaction is L-aspartyl-tRNA(Asn) + L-glutamine + ATP + H2O = L-asparaginyl-tRNA(Asn) + L-glutamate + ADP + phosphate + 2 H(+). In terms of biological role, allows the formation of correctly charged Asn-tRNA(Asn) or Gln-tRNA(Gln) through the transamidation of misacylated Asp-tRNA(Asn) or Glu-tRNA(Gln) in organisms which lack either or both of asparaginyl-tRNA or glutaminyl-tRNA synthetases. The reaction takes place in the presence of glutamine and ATP through an activated phospho-Asp-tRNA(Asn) or phospho-Glu-tRNA(Gln). The chain is Aspartyl/glutamyl-tRNA(Asn/Gln) amidotransferase subunit B from Azoarcus sp. (strain BH72).